The sequence spans 590 residues: Arginine--tRNA ligase, cytoplasmic (590 aa).

At Ala2 the chain carries N-acetylalanine. L-arginine is bound by residues 137–139 (SPN), His148, Tyr322, Asp326, and Gln350. The 'HIGH' region motif lies at 138–149 (PNIAKEMHVGHL). The interval 470 to 484 (DTAVYLLYAHARICS) is interaction with tRNA.

The protein belongs to the class-I aminoacyl-tRNA synthetase family.

The protein localises to the cytoplasm. Its subcellular location is the cytosol. It carries out the reaction tRNA(Arg) + L-arginine + ATP = L-arginyl-tRNA(Arg) + AMP + diphosphate. Its function is as follows. Forms part of a macromolecular complex that catalyzes the attachment of specific amino acids to cognate tRNAs during protein synthesis. The polypeptide is Arginine--tRNA ligase, cytoplasmic (Arabidopsis thaliana (Mouse-ear cress)).